The chain runs to 248 residues: Pyridoxine 5'-phosphate synthase (248 aa).

Asn12 serves as a coordination point for 3-amino-2-oxopropyl phosphate. Residue 14–15 (DH) coordinates 1-deoxy-D-xylulose 5-phosphate. Arg23 provides a ligand contact to 3-amino-2-oxopropyl phosphate. The active-site Proton acceptor is His48. 1-deoxy-D-xylulose 5-phosphate is bound by residues Arg50 and His55. Glu75 (proton acceptor) is an active-site residue. Residue Thr105 coordinates 1-deoxy-D-xylulose 5-phosphate. His196 acts as the Proton donor in catalysis. 3-amino-2-oxopropyl phosphate-binding positions include Gly197 and 218–219 (GH).

The protein belongs to the PNP synthase family. In terms of assembly, homooctamer; tetramer of dimers.

The protein localises to the cytoplasm. It carries out the reaction 3-amino-2-oxopropyl phosphate + 1-deoxy-D-xylulose 5-phosphate = pyridoxine 5'-phosphate + phosphate + 2 H2O + H(+). The protein operates within cofactor biosynthesis; pyridoxine 5'-phosphate biosynthesis; pyridoxine 5'-phosphate from D-erythrose 4-phosphate: step 5/5. Catalyzes the complicated ring closure reaction between the two acyclic compounds 1-deoxy-D-xylulose-5-phosphate (DXP) and 3-amino-2-oxopropyl phosphate (1-amino-acetone-3-phosphate or AAP) to form pyridoxine 5'-phosphate (PNP) and inorganic phosphate. This Pseudomonas aeruginosa (strain UCBPP-PA14) protein is Pyridoxine 5'-phosphate synthase.